Here is a 153-residue protein sequence, read N- to C-terminus: Putative riboflavin kinase (153 aa).

2 residues coordinate Mg(2+): Thr-28 and Asn-30. The Nucleophile role is filled by Glu-80.

As to quaternary structure, monomer. Requires Zn(2+) as cofactor. The cofactor is Mg(2+).

Its subcellular location is the cytoplasm. It carries out the reaction riboflavin + ATP = FMN + ADP + H(+). The protein operates within cofactor biosynthesis; FMN biosynthesis; FMN from riboflavin (ATP route): step 1/1. Catalyzes the phosphorylation of riboflavin (vitamin B2) to form flavin-mononucleotide (FMN). This is Putative riboflavin kinase from Drosophila melanogaster (Fruit fly).